A 526-amino-acid chain; its full sequence is Peptide chain release factor 3 (526 aa).

One can recognise a tr-type G domain in the interval Asp9–Leu277. GTP-binding positions include Ser18–Thr25, Asp86–His90, and Asn140–Asp143.

This sequence belongs to the TRAFAC class translation factor GTPase superfamily. Classic translation factor GTPase family. PrfC subfamily.

It localises to the cytoplasm. Its function is as follows. Increases the formation of ribosomal termination complexes and stimulates activities of RF-1 and RF-2. It binds guanine nucleotides and has strong preference for UGA stop codons. It may interact directly with the ribosome. The stimulation of RF-1 and RF-2 is significantly reduced by GTP and GDP, but not by GMP. The sequence is that of Peptide chain release factor 3 from Geobacter sulfurreducens (strain ATCC 51573 / DSM 12127 / PCA).